Here is a 244-residue protein sequence, read N- to C-terminus: Phosphoadenosine 5'-phosphosulfate reductase (244 aa).

The active-site Nucleophile; cysteine thiosulfonate intermediate is Cys-239.

It belongs to the PAPS reductase family. CysH subfamily.

Its subcellular location is the cytoplasm. The catalysed reaction is [thioredoxin]-disulfide + sulfite + adenosine 3',5'-bisphosphate + 2 H(+) = [thioredoxin]-dithiol + 3'-phosphoadenylyl sulfate. Its pathway is sulfur metabolism; hydrogen sulfide biosynthesis; sulfite from sulfate: step 3/3. Its function is as follows. Catalyzes the formation of sulfite from phosphoadenosine 5'-phosphosulfate (PAPS) using thioredoxin as an electron donor. The sequence is that of Phosphoadenosine 5'-phosphosulfate reductase from Klebsiella pneumoniae (strain 342).